We begin with the raw amino-acid sequence, 227 residues long: PKHD-type hydroxylase BPSS1206 (227 aa).

In terms of domain architecture, Fe2OG dioxygenase spans 78–178 (KVFPPLFNRY…RVASFFWIQS (101 aa)). Residues His96, Asp98, and His159 each contribute to the Fe cation site. Arg169 provides a ligand contact to 2-oxoglutarate.

It depends on Fe(2+) as a cofactor. Requires L-ascorbate as cofactor.

This Burkholderia pseudomallei (strain K96243) protein is PKHD-type hydroxylase BPSS1206.